We begin with the raw amino-acid sequence, 278 residues long: MARLKLIIAYAGTRYAGWQIQCLPAGRPHAVQQPTVQQAVEDAAKAILGSAVRVHGAGRTDSGVHAEGQVAHLDIPDAKAAVDWRRALNAKLPEDISVLQAAVVPDGFHARFDAVKKRYTYRIWLTRAFVLPQRRPFVHMTGPLDIAAMDAAAAFMTGTHDFASFQNAGTELATTVRTVYSITRTPGLAPDDFPRSHDTTPRAPLELAWHFEADGFLKQMVRNMMGLLLWTGTGRCAPEDVPAIIAARDRRLSAPTAPACGLTMERVFYPDECCPPES.

Aspartate 61 serves as the catalytic Nucleophile. Tyrosine 119 serves as a coordination point for substrate.

It belongs to the tRNA pseudouridine synthase TruA family. Homodimer.

It catalyses the reaction uridine(38/39/40) in tRNA = pseudouridine(38/39/40) in tRNA. Functionally, formation of pseudouridine at positions 38, 39 and 40 in the anticodon stem and loop of transfer RNAs. This chain is tRNA pseudouridine synthase A, found in Oleidesulfovibrio alaskensis (strain ATCC BAA-1058 / DSM 17464 / G20) (Desulfovibrio alaskensis).